Reading from the N-terminus, the 497-residue chain is Cytochrome P450 2D6 (497 aa).

A substrate-binding site is contributed by Asp-301. Residue Cys-443 participates in heme binding.

It belongs to the cytochrome P450 family. Heme is required as a cofactor.

The protein localises to the endoplasmic reticulum membrane. It localises to the microsome membrane. The enzyme catalyses (5Z,8Z,11Z,14Z)-eicosatetraenoate + reduced [NADPH--hemoprotein reductase] + O2 = (8R,9S)-epoxy-(5Z,11Z,14Z)-eicosatrienoate + oxidized [NADPH--hemoprotein reductase] + H2O + H(+). It carries out the reaction (5Z,8Z,11Z,14Z)-eicosatetraenoate + reduced [NADPH--hemoprotein reductase] + O2 = (11R,12S)-epoxy-(5Z,8Z,14Z)-eicosatrienoate + oxidized [NADPH--hemoprotein reductase] + H2O + H(+). The catalysed reaction is (5Z,8Z,11Z,14Z)-eicosatetraenoate + reduced [NADPH--hemoprotein reductase] + O2 = (14S,15R)-epoxy-(5Z,8Z,11Z)-eicosatrienoate + oxidized [NADPH--hemoprotein reductase] + H2O + H(+). It catalyses the reaction N-(5Z,8Z,11Z,14Z-eicosatetraenoyl)-ethanolamine + reduced [NADPH--hemoprotein reductase] + O2 = N-(8,9-epoxy-5Z,11Z,14Z-eicosatrienoyl)-ethanolamine + oxidized [NADPH--hemoprotein reductase] + H2O + H(+). The enzyme catalyses N-(5Z,8Z,11Z,14Z-eicosatetraenoyl)-ethanolamine + reduced [NADPH--hemoprotein reductase] + O2 = N-(11,12-epoxy-5Z,8Z,14Z-eicosatrienoyl)-ethanolamine + oxidized [NADPH--hemoprotein reductase] + H2O + H(+). It carries out the reaction N-(5Z,8Z,11Z,14Z-eicosatetraenoyl)-ethanolamine + reduced [NADPH--hemoprotein reductase] + O2 = N-(14,15-epoxy-5Z,8Z,11Z-eicosatrienoyl)-ethanolamine + oxidized [NADPH--hemoprotein reductase] + H2O + H(+). The catalysed reaction is N-(5Z,8Z,11Z,14Z-eicosatetraenoyl)-ethanolamine + reduced [NADPH--hemoprotein reductase] + O2 = N-(20-hydroxy-5Z,8Z,11Z,14Z-eicosatetraenoyl)-ethanolamine + oxidized [NADPH--hemoprotein reductase] + H2O + H(+). It catalyses the reaction (5Z,8Z,11Z,14Z,17Z)-eicosapentaenoate + reduced [NADPH--hemoprotein reductase] + O2 = (17S,18R)-epoxy-(5Z,8Z,11Z,14Z)-eicosatetraenoate + oxidized [NADPH--hemoprotein reductase] + H2O + H(+). The enzyme catalyses (4Z,7Z,10Z,13Z,16Z,19Z)-docosahexaenoate + reduced [NADPH--hemoprotein reductase] + O2 = (19R,20S)-epoxy-(4Z,7Z,10Z,13Z,16Z)-docosapentaenoate + oxidized [NADPH--hemoprotein reductase] + H2O + H(+). It carries out the reaction (4Z,7Z,10Z,13Z,16Z,19Z)-docosahexaenoate + reduced [NADPH--hemoprotein reductase] + O2 = (19S,20R)-epoxy-(4Z,7Z,10Z,13Z,16Z)-docosapentaenoate + oxidized [NADPH--hemoprotein reductase] + H2O + H(+). The catalysed reaction is cholesterol + reduced [NADPH--hemoprotein reductase] + O2 = 25-hydroxycholesterol + oxidized [NADPH--hemoprotein reductase] + H2O + H(+). It catalyses the reaction all-trans-retinol + reduced [NADPH--hemoprotein reductase] + O2 = all-trans-retinal + oxidized [NADPH--hemoprotein reductase] + 2 H2O + H(+). Its pathway is cofactor metabolism; retinol metabolism. It functions in the pathway lipid metabolism; fatty acid metabolism. The protein operates within steroid metabolism; cholesterol metabolism. Its function is as follows. A cytochrome P450 monooxygenase involved in the metabolism of fatty acids, steroids and retinoids. Mechanistically, uses molecular oxygen inserting one oxygen atom into a substrate, and reducing the second into a water molecule, with two electrons provided by NADPH via cytochrome P450 reductase (NADPH--hemoprotein reductase). Catalyzes the epoxidation of double bonds of polyunsaturated fatty acids (PUFA). Metabolizes endocannabinoid arachidonoylethanolamide (anandamide) to 20-hydroxyeicosatetraenoic acid ethanolamide (20-HETE-EA) and 8,9-, 11,12-, and 14,15-epoxyeicosatrienoic acid ethanolamides (EpETrE-EAs), potentially modulating endocannabinoid system signaling. Catalyzes the hydroxylation of carbon-hydrogen bonds. Metabolizes cholesterol toward 25-hydroxycholesterol, a physiological regulator of cellular cholesterol homeostasis. Catalyzes the oxidative transformations of all-trans retinol to all-trans retinal, a precursor for the active form all-trans-retinoic acid. Also involved in the oxidative metabolism of drugs such as antiarrhythmics, adrenoceptor antagonists, and tricyclic antidepressants. The protein is Cytochrome P450 2D6 (CYP2D6) of Pan troglodytes (Chimpanzee).